Reading from the N-terminus, the 38-residue chain is Photosystem II reaction center protein L (38 aa).

A helical transmembrane segment spans residues 17 to 37 (SLFWGLLLIFILAVLFSSYFF).

Belongs to the PsbL family. PSII is composed of 1 copy each of membrane proteins PsbA, PsbB, PsbC, PsbD, PsbE, PsbF, PsbH, PsbI, PsbJ, PsbK, PsbL, PsbM, PsbT, PsbX, PsbY, PsbZ, Psb30/Ycf12, at least 3 peripheral proteins of the oxygen-evolving complex and a large number of cofactors. It forms dimeric complexes.

The protein localises to the plastid. It localises to the chloroplast thylakoid membrane. Functionally, one of the components of the core complex of photosystem II (PSII). PSII is a light-driven water:plastoquinone oxidoreductase that uses light energy to abstract electrons from H(2)O, generating O(2) and a proton gradient subsequently used for ATP formation. It consists of a core antenna complex that captures photons, and an electron transfer chain that converts photonic excitation into a charge separation. This subunit is found at the monomer-monomer interface and is required for correct PSII assembly and/or dimerization. This is Photosystem II reaction center protein L from Guillardia theta (Cryptophyte).